The following is a 273-amino-acid chain: SPRY domain-containing SOCS box protein 4 (273 aa).

Residues 34–233 enclose the B30.2/SPRY domain; that stretch reads PARLDQLLDM…MRYINGLDPE (200 aa). Residues 234-273 enclose the SOCS box domain; it reads PLPLMDLCRRSIRSALGRQRLRDIGSLPLPQSLKNYLQYQ.

The protein belongs to the SPSB family. In terms of assembly, component of the probable ECS(SPSB4) E3 ubiquitin-protein ligase complex which contains CUL5, RNF7/RBX2, Elongin BC complex and SPSB4. Interacts with CUL5; RNF7; ELOB and ELOC. Interacts with MET. Interacts (via B30.2/SPRY domain) with PAWR; this interaction occurs in association with the Elongin BC complex. Interacts with NOS2. Interacts with EPHB2.

It localises to the cytoplasm. It is found in the cytosol. The protein operates within protein modification; protein ubiquitination. Its function is as follows. Substrate recognition component of a SCF-like ECS (Elongin BC-CUL2/5-SOCS-box protein) E3 ubiquitin-protein ligase complex which mediates the ubiquitination and subsequent proteasomal degradation of target proteins. Negatively regulates nitric oxide (NO) production and limits cellular toxicity in activated macrophages by mediating the ubiquitination and proteasomal degradation of NOS2. Acts as a bridge which links NOS2 with the ECS E3 ubiquitin ligase complex components ELOC and CUL5. Diminishes EphB2-dependent cell repulsive responses by mediating the ubiquitination and degradation of the EphB2/CTF2. Regulates cellular clock function by mediating ubiquitination and proteasomal degradation of the circadian transcriptional repressor NR1D1. The chain is SPRY domain-containing SOCS box protein 4 (Spsb4) from Mus musculus (Mouse).